The chain runs to 237 residues: Protein GrpE (237 aa).

Residues 1-65 (MTDSYKLPDN…DAREDDRDPT (65 aa)) are disordered. The span at 55–65 (VDAREDDRDPT) shows a compositional bias: basic and acidic residues.

Belongs to the GrpE family. In terms of assembly, homodimer.

It is found in the cytoplasm. In terms of biological role, participates actively in the response to hyperosmotic and heat shock by preventing the aggregation of stress-denatured proteins, in association with DnaK and GrpE. It is the nucleotide exchange factor for DnaK and may function as a thermosensor. Unfolded proteins bind initially to DnaJ; upon interaction with the DnaJ-bound protein, DnaK hydrolyzes its bound ATP, resulting in the formation of a stable complex. GrpE releases ADP from DnaK; ATP binding to DnaK triggers the release of the substrate protein, thus completing the reaction cycle. Several rounds of ATP-dependent interactions between DnaJ, DnaK and GrpE are required for fully efficient folding. The protein is Protein GrpE of Corynebacterium efficiens (strain DSM 44549 / YS-314 / AJ 12310 / JCM 11189 / NBRC 100395).